Here is a 357-residue protein sequence, read N- to C-terminus: Aspartate carbamoyltransferase catalytic subunit (357 aa).

The segment covering 1–17 (MSNSIDSQSIPTISPTD) has biased composition (polar residues). A disordered region spans residues 1–21 (MSNSIDSQSIPTISPTDYTKF). Residues Arg-97 and Thr-98 each contribute to the carbamoyl phosphate site. Residue Lys-125 participates in L-aspartate binding. Residues Arg-147, His-177, and Gln-180 each contribute to the carbamoyl phosphate site. L-aspartate contacts are provided by Arg-211 and Arg-266. 2 residues coordinate carbamoyl phosphate: Gly-307 and Pro-308.

It belongs to the aspartate/ornithine carbamoyltransferase superfamily. ATCase family. Heterododecamer (2C3:3R2) of six catalytic PyrB chains organized as two trimers (C3), and six regulatory PyrI chains organized as three dimers (R2).

The catalysed reaction is carbamoyl phosphate + L-aspartate = N-carbamoyl-L-aspartate + phosphate + H(+). It functions in the pathway pyrimidine metabolism; UMP biosynthesis via de novo pathway; (S)-dihydroorotate from bicarbonate: step 2/3. Catalyzes the condensation of carbamoyl phosphate and aspartate to form carbamoyl aspartate and inorganic phosphate, the committed step in the de novo pyrimidine nucleotide biosynthesis pathway. This chain is Aspartate carbamoyltransferase catalytic subunit, found in Psychrobacter arcticus (strain DSM 17307 / VKM B-2377 / 273-4).